The primary structure comprises 274 residues: NH(3)-dependent NAD(+) synthetase (274 aa).

46-53 (GISGGQDS) provides a ligand contact to ATP. Position 52 (Asp-52) interacts with Mg(2+). Arg-140 is a binding site for deamido-NAD(+). Thr-160 is an ATP binding site. Glu-165 is a Mg(2+) binding site. Residues Lys-173 and Asp-180 each coordinate deamido-NAD(+). The ATP site is built by Lys-189 and Thr-211. Position 260–261 (260–261 (HK)) interacts with deamido-NAD(+).

This sequence belongs to the NAD synthetase family. In terms of assembly, homodimer.

It carries out the reaction deamido-NAD(+) + NH4(+) + ATP = AMP + diphosphate + NAD(+) + H(+). Its pathway is cofactor biosynthesis; NAD(+) biosynthesis; NAD(+) from deamido-NAD(+) (ammonia route): step 1/1. Functionally, catalyzes the ATP-dependent amidation of deamido-NAD to form NAD. Uses ammonia as a nitrogen source. The protein is NH(3)-dependent NAD(+) synthetase of Sodalis glossinidius (strain morsitans).